The sequence spans 73 residues: Beta-defensin 50 (73 aa).

The first 23 residues, 1–23 (MKTLHLLLLISGLLSVFVKGVGS), serve as a signal peptide directing secretion. 2 disulfide bridges follow: Cys34/Cys63 and Cys46/Cys64.

Belongs to the beta-defensin family.

The protein localises to the secreted. Functionally, has bactericidal activity. The protein is Beta-defensin 50 (Defb50) of Rattus norvegicus (Rat).